The following is an 891-amino-acid chain: Major core protein 4a precursor (891 aa).

The protein belongs to the poxviridae protein P4a family. In terms of assembly, interacts with P39/A4.

Its subcellular location is the virion. In terms of biological role, core protein 4a is the most abundant virion protein. Major component of the virion core that undergoes proteolytic processing during the immature virion (IV) to mature virion (MV) transition. The polypeptide is Major core protein 4a precursor (Fowlpox virus (strain NVSL) (FPV)).